Here is a 195-residue protein sequence, read N- to C-terminus: Holliday junction branch migration complex subunit RuvA (195 aa).

The interval 1–62 is domain I; the sequence is MIEFVKGPVA…EDQQTLYGFR (62 aa). Residues 63–141 are domain II; that stretch reads SRRERELFNK…ELAPDYVPNE (79 aa). The tract at residues 141 to 145 is flexible linker; sequence EGLFA. Residues 146 to 195 form a domain III region; that stretch reads QGASELDEACEALVALGYSEREIAKVRKALSGEILTTDAYIKRALQLLLK.

Belongs to the RuvA family. In terms of assembly, homotetramer. Forms an RuvA(8)-RuvB(12)-Holliday junction (HJ) complex. HJ DNA is sandwiched between 2 RuvA tetramers; dsDNA enters through RuvA and exits via RuvB. An RuvB hexamer assembles on each DNA strand where it exits the tetramer. Each RuvB hexamer is contacted by two RuvA subunits (via domain III) on 2 adjacent RuvB subunits; this complex drives branch migration. In the full resolvosome a probable DNA-RuvA(4)-RuvB(12)-RuvC(2) complex forms which resolves the HJ.

The protein localises to the cytoplasm. Functionally, the RuvA-RuvB-RuvC complex processes Holliday junction (HJ) DNA during genetic recombination and DNA repair, while the RuvA-RuvB complex plays an important role in the rescue of blocked DNA replication forks via replication fork reversal (RFR). RuvA specifically binds to HJ cruciform DNA, conferring on it an open structure. The RuvB hexamer acts as an ATP-dependent pump, pulling dsDNA into and through the RuvAB complex. HJ branch migration allows RuvC to scan DNA until it finds its consensus sequence, where it cleaves and resolves the cruciform DNA. The protein is Holliday junction branch migration complex subunit RuvA of Exiguobacterium sp. (strain ATCC BAA-1283 / AT1b).